A 341-amino-acid polypeptide reads, in one-letter code: UPF0283 membrane protein VV2076 (341 aa).

4 helical membrane passes run 64–84, 93–113, 207–227, and 255–275; these read LAGG…VDSV, WLTL…LGAM, ESAA…LVAW, and LVLA…AGMD.

Belongs to the UPF0283 family.

The protein resides in the cell inner membrane. This is UPF0283 membrane protein VV2076 from Vibrio vulnificus (strain YJ016).